A 305-amino-acid polypeptide reads, in one-letter code: Dihydroorotate dehydrogenase A (fumarate) (305 aa).

Residues Ser-21 and 45–46 (KS) each bind FMN. Residues Lys-45, 69–73 (NAIGL), and Asn-129 each bind substrate. FMN is bound at residue Asn-129. Cys-132 functions as the Nucleophile in the catalytic mechanism. Lys-167 and Ile-193 together coordinate FMN. Residue 194–195 (NT) coordinates substrate. FMN-binding positions include Gly-219 and 245–246 (GG).

It belongs to the dihydroorotate dehydrogenase family. Type 1 subfamily. As to quaternary structure, homodimer. FMN serves as cofactor.

The protein localises to the cytoplasm. It catalyses the reaction (S)-dihydroorotate + fumarate = orotate + succinate. The protein operates within pyrimidine metabolism; UMP biosynthesis via de novo pathway. Its function is as follows. Catalyzes the conversion of dihydroorotate to orotate with fumarate as the electron acceptor. This is Dihydroorotate dehydrogenase A (fumarate) (pyrD) from Lactiplantibacillus plantarum (strain ATCC BAA-793 / NCIMB 8826 / WCFS1) (Lactobacillus plantarum).